Here is a 573-residue protein sequence, read N- to C-terminus: Acetolactate synthase large subunit (573 aa).

Glu-51 provides a ligand contact to thiamine diphosphate. Residues Arg-153, 261–282, and 304–323 each bind FAD; these read HGTL…IGVR and DIDP…IVGN. Residues 396-476 form a thiamine pyrophosphate binding region; the sequence is QHQMFAALHY…VVIICLNNHF (81 aa). The Mg(2+) site is built by Asp-447 and Asn-474.

Belongs to the TPP enzyme family. As to quaternary structure, dimer of large and small chains. It depends on Mg(2+) as a cofactor. Thiamine diphosphate is required as a cofactor.

The catalysed reaction is 2 pyruvate + H(+) = (2S)-2-acetolactate + CO2. It functions in the pathway amino-acid biosynthesis; L-isoleucine biosynthesis; L-isoleucine from 2-oxobutanoate: step 1/4. The protein operates within amino-acid biosynthesis; L-valine biosynthesis; L-valine from pyruvate: step 1/4. The polypeptide is Acetolactate synthase large subunit (ilvI) (Haemophilus influenzae (strain ATCC 51907 / DSM 11121 / KW20 / Rd)).